Consider the following 238-residue polypeptide: Uridylate kinase (238 aa).

An ATP-binding site is contributed by 12–15 (KLSG). G54 is a binding site for UMP. ATP is bound by residues G55 and R59. UMP is bound by residues D74 and 135-142 (TGNPFFTT). ATP-binding residues include T162, Y168, and D171.

Belongs to the UMP kinase family. In terms of assembly, homohexamer.

The protein localises to the cytoplasm. It catalyses the reaction UMP + ATP = UDP + ADP. Its pathway is pyrimidine metabolism; CTP biosynthesis via de novo pathway; UDP from UMP (UMPK route): step 1/1. With respect to regulation, inhibited by UTP. Its function is as follows. Catalyzes the reversible phosphorylation of UMP to UDP. The polypeptide is Uridylate kinase (Bordetella parapertussis (strain 12822 / ATCC BAA-587 / NCTC 13253)).